We begin with the raw amino-acid sequence, 116 residues long: Non-specific lipid-transfer protein D, cotyledon-specific isoform (116 aa).

Positions 1 to 24 (MKNIFFSVFFLLSFLLCLANVSEA) are cleaved as a signal peptide. Intrachain disulfides connect Cys28–Cys76, Cys38–Cys53, Cys54–Cys98, and Cys74–Cys112.

This sequence belongs to the plant LTP family.

Its function is as follows. Plant non-specific lipid-transfer proteins transfer phospholipids as well as galactolipids across membranes. May play a role in wax or cutin deposition in the cell walls of expanding epidermal cells and certain secretory tissues. This chain is Non-specific lipid-transfer protein D, cotyledon-specific isoform, found in Ricinus communis (Castor bean).